The sequence spans 80 residues: Cell division protein ZapB (80 aa).

Residues 3–80 (FEVLEQLESK…ALLGKMDEVE (78 aa)) are a coiled coil. A compositionally biased stretch (basic and acidic residues) spans 41–53 (ANELRSQREELEQ). The interval 41 to 60 (ANELRSQREELEQKSQQAQQ) is disordered.

It belongs to the ZapB family. As to quaternary structure, homodimer. The ends of the coiled-coil dimer bind to each other, forming polymers. Interacts with FtsZ.

The protein localises to the cytoplasm. Non-essential, abundant cell division factor that is required for proper Z-ring formation. It is recruited early to the divisome by direct interaction with FtsZ, stimulating Z-ring assembly and thereby promoting cell division earlier in the cell cycle. Its recruitment to the Z-ring requires functional FtsA or ZipA. This chain is Cell division protein ZapB, found in Vibrio campbellii (strain ATCC BAA-1116).